The sequence spans 273 residues: Imidazole glycerol phosphate synthase subunit HisF (273 aa).

Residues Asp11 and Asp134 contribute to the active site.

This sequence belongs to the HisA/HisF family. In terms of assembly, heterodimer of HisH and HisF.

The protein resides in the cytoplasm. It catalyses the reaction 5-[(5-phospho-1-deoxy-D-ribulos-1-ylimino)methylamino]-1-(5-phospho-beta-D-ribosyl)imidazole-4-carboxamide + L-glutamine = D-erythro-1-(imidazol-4-yl)glycerol 3-phosphate + 5-amino-1-(5-phospho-beta-D-ribosyl)imidazole-4-carboxamide + L-glutamate + H(+). It participates in amino-acid biosynthesis; L-histidine biosynthesis; L-histidine from 5-phospho-alpha-D-ribose 1-diphosphate: step 5/9. Functionally, IGPS catalyzes the conversion of PRFAR and glutamine to IGP, AICAR and glutamate. The HisF subunit catalyzes the cyclization activity that produces IGP and AICAR from PRFAR using the ammonia provided by the HisH subunit. This Methanosarcina acetivorans (strain ATCC 35395 / DSM 2834 / JCM 12185 / C2A) protein is Imidazole glycerol phosphate synthase subunit HisF.